A 24-amino-acid chain; its full sequence is Cupiennin-5a (24 aa).

As to expression, expressed by the venom gland.

Its subcellular location is the secreted. This Cupiennius salei (American wandering spider) protein is Cupiennin-5a.